The following is a 41-amino-acid chain: Large ribosomal subunit protein bL36 (41 aa).

The protein belongs to the bacterial ribosomal protein bL36 family.

The chain is Large ribosomal subunit protein bL36 from Rickettsia africae (strain ESF-5).